Here is a 226-residue protein sequence, read N- to C-terminus: Large ribosomal subunit protein uL1 (226 aa).

The protein belongs to the universal ribosomal protein uL1 family. In terms of assembly, part of the 50S ribosomal subunit.

Binds directly to 23S rRNA. Probably involved in E site tRNA release. In terms of biological role, protein L1 is also a translational repressor protein, it controls the translation of its operon by binding to its mRNA. The chain is Large ribosomal subunit protein uL1 from Korarchaeum cryptofilum (strain OPF8).